The following is a 365-amino-acid chain: 3-dehydroquinate synthase (365 aa).

Residues 69 to 74, 103 to 107, 127 to 128, Lys140, and Lys149 contribute to the NAD(+) site; these read DGEAHK, GVIGD, and TT. Positions 182, 245, and 262 each coordinate Zn(2+).

Belongs to the sugar phosphate cyclases superfamily. Dehydroquinate synthase family. The cofactor is Co(2+). It depends on Zn(2+) as a cofactor. NAD(+) is required as a cofactor.

It is found in the cytoplasm. It carries out the reaction 7-phospho-2-dehydro-3-deoxy-D-arabino-heptonate = 3-dehydroquinate + phosphate. It participates in metabolic intermediate biosynthesis; chorismate biosynthesis; chorismate from D-erythrose 4-phosphate and phosphoenolpyruvate: step 2/7. Catalyzes the conversion of 3-deoxy-D-arabino-heptulosonate 7-phosphate (DAHP) to dehydroquinate (DHQ). The polypeptide is 3-dehydroquinate synthase (Pseudomonas putida (strain ATCC 700007 / DSM 6899 / JCM 31910 / BCRC 17059 / LMG 24140 / F1)).